Here is an 860-residue protein sequence, read N- to C-terminus: Serine/threonine-protein kinase greatwall (860 aa).

The region spanning 23 to 816 is the Protein kinase domain; that stretch reads FVLVKPISRG…LKELKDHPFF (794 aa). Residues 29–37 and Lys52 each bind ATP; that span reads ISRGAFGKV. Residue Asp146 is the Proton acceptor of the active site. Positions 514-537 are disordered; sequence QGEEGGKAEPNSSSSTSPGDERNI. Phosphothreonine; by CDK1 is present on Thr722. The AGC-kinase C-terminal domain maps to 817–860; sequence DGVDWENLHHQTMPFIPQPDNETDTSYFEARNTAQHLTVSGFSL.

It belongs to the protein kinase superfamily. AGC Ser/Thr protein kinase family. In terms of processing, phosphorylation at Thr-722 by CDK1 during M phase activates its kinase activity. Maximum phosphorylation occurs in prometaphase.

It localises to the cytoplasm. It is found in the cytoskeleton. The protein localises to the microtubule organizing center. The protein resides in the centrosome. Its subcellular location is the nucleus. It localises to the cleavage furrow. It carries out the reaction L-seryl-[protein] + ATP = O-phospho-L-seryl-[protein] + ADP + H(+). The catalysed reaction is L-threonyl-[protein] + ATP = O-phospho-L-threonyl-[protein] + ADP + H(+). In terms of biological role, serine/threonine kinase that plays a key role in M phase by acting as a regulator of mitosis entry and maintenance. Acts by promoting the inactivation of protein phosphatase 2A (PP2A) during M phase: does not directly inhibit PP2A but acts by mediating phosphorylation and subsequent activation of arpp19 and ensa at 'Ser-62' and 'Ser-74', respectively. ARPP19 and ENSA are phosphatase inhibitors that specifically inhibit the ppp2r2d (PR55-delta) subunit of PP2A. Inactivation of PP2A during M phase is essential to keep cyclin-B1-CDK1 activity high. Following DNA damage, it is also involved in checkpoint recovery by being inhibited. May be involved in megakaryocyte differentiation. In Danio rerio (Zebrafish), this protein is Serine/threonine-protein kinase greatwall (mastl).